A 354-amino-acid polypeptide reads, in one-letter code: Glucose 1-dehydrogenase (354 aa).

Residues 1–27 are disordered; it reads MKVIGVTRDDDGPQLLERERPSPDPGE. Over residues 7–22 the composition is skewed to basic and acidic residues; that stretch reads TRDDDGPQLLERERPS. Zn(2+) is bound at residue D38. T40 contacts substrate. H63 and E64 together coordinate Zn(2+). The segment at 91–110 is disordered; sequence PNGETNEYFRRGEPDMAPDG. Residues E114 and E150 each contribute to the substrate site. Position 150 (E150) interacts with Zn(2+). Residues 181–184, 204–205, 269–271, and 298–300 contribute to the NADP(+) site; these read NGSL, RR, LGI, and TVN. A substrate-binding site is contributed by N300.

This sequence belongs to the zinc-containing alcohol dehydrogenase family. Glucose 1-dehydrogenase subfamily. It depends on Zn(2+) as a cofactor.

It carries out the reaction D-glucose + NAD(+) = D-glucono-1,5-lactone + NADH + H(+). The enzyme catalyses D-glucose + NADP(+) = D-glucono-1,5-lactone + NADPH + H(+). Functionally, catalyzes the NAD(P)(+)-dependent oxidation of D-glucose to D-gluconate via gluconolactone. Can utilize both NAD(+) and NADP(+) as electron acceptor. Is involved in the degradation of glucose through a modified Entner-Doudoroff pathway. The polypeptide is Glucose 1-dehydrogenase (Haloarcula marismortui (strain ATCC 43049 / DSM 3752 / JCM 8966 / VKM B-1809) (Halobacterium marismortui)).